Reading from the N-terminus, the 216-residue chain is Ras-related protein Rab-5C (216 aa).

Residues serine 30, alanine 31, glycine 33, lysine 34, serine 35, serine 36, histidine 47, glutamate 48, threonine 53, and glycine 79 each contribute to the GTP site. Serine 35 contacts Mg(2+). 2 short sequence motifs (switch) span residues 45 to 57 and 78 to 94; these read QFHE…IGAA and AGQE…YRGA. Threonine 53 contributes to the Mg(2+) binding site. A Phosphoserine; by LRRK2 modification is found at serine 85. The GTP site is built by asparagine 134, lysine 135, aspartate 137, alanine 165, and lysine 166. Positions 185-216 are disordered; the sequence is NEPQNATGAPGRNRGVDLQENNPASRSQCCSN. Residues 203–216 are compositionally biased toward polar residues; the sequence is QENNPASRSQCCSN. 2 S-geranylgeranyl cysteine lipidation sites follow: cysteine 213 and cysteine 214.

It belongs to the small GTPase superfamily. Rab family. In terms of assembly, interacts with EEA1. Interacts with INCA1. Interacts with GDI1, GDI2, CHML and CHM; phosphorylation at Ser-85 disrupts this interaction. Requires Mg(2+) as cofactor. In terms of processing, phosphorylation of Ser-85 in the switch II region by LRRK2 prevents the association of RAB regulatory proteins, including CHM, CHML and RAB GDP dissociation inhibitors GDI1 and GDI2. Post-translationally, (Microbial infection) Glycosylated on arginine residues by S.typhimurium protein Ssek3.

It localises to the cell membrane. It is found in the early endosome membrane. Its subcellular location is the melanosome. The enzyme catalyses GTP + H2O = GDP + phosphate + H(+). Regulated by guanine nucleotide exchange factors (GEFs) which promote the exchange of bound GDP for free GTP. Regulated by GTPase activating proteins (GAPs) which increase the GTP hydrolysis activity. Inhibited by GDP dissociation inhibitors (GDIs). Its function is as follows. The small GTPases Rab are key regulators of intracellular membrane trafficking, from the formation of transport vesicles to their fusion with membranes. Rabs cycle between an inactive GDP-bound form and an active GTP-bound form that is able to recruit to membranes different sets of downstream effectors directly responsible for vesicle formation, movement, tethering and fusion. This is Ras-related protein Rab-5C from Homo sapiens (Human).